A 515-amino-acid chain; its full sequence is Fatty acyl-CoA reductase 1 (515 aa).

Residues 1 to 465 (MVSIPEYYEG…ARKHLNKLRN (465 aa)) lie on the Cytoplasmic side of the membrane. The necessary and sufficient for PEX19-mediated localization into peroxisome membrane stretch occupies residues 451 to 507 (SGLPAARKHLNKLRNIRYGFNTILVILIWRIFIARSQMARNIWYFVVSLCYKFLSYF). The chain crosses the membrane as a helical span at residues 466–483 (IRYGFNTILVILIWRIFI). Over 484–515 (ARSQMARNIWYFVVSLCYKFLSYFRASSTMRY) the chain is Peroxisomal.

It belongs to the fatty acyl-CoA reductase family. As to quaternary structure, interacts with PEX19; PEX19 mediates the targeting of FAR1 to peroxisomes.

The protein resides in the peroxisome membrane. It catalyses the reaction a long-chain fatty acyl-CoA + 2 NADPH + 2 H(+) = a long-chain primary fatty alcohol + 2 NADP(+) + CoA. The enzyme catalyses hexadecanoyl-CoA + 2 NADPH + 2 H(+) = hexadecan-1-ol + 2 NADP(+) + CoA. It carries out the reaction octadecanoyl-CoA + 2 NADPH + 2 H(+) = octadecan-1-ol + 2 NADP(+) + CoA. The catalysed reaction is (9Z)-octadecenoyl-CoA + 2 NADPH + 2 H(+) = (9Z)-octadecen-1-ol + 2 NADP(+) + CoA. It catalyses the reaction (9Z,12Z)-octadecadienoyl-CoA + 2 NADPH + 2 H(+) = (9Z,12Z)-octadecadien-1-ol + 2 NADP(+) + CoA. The enzyme catalyses eicosanoyl-CoA + 2 NADPH + 2 H(+) = eicosan-1-ol + 2 NADP(+) + CoA. It carries out the reaction 16-methylheptadecanoyl-CoA + 2 NADPH + 2 H(+) = 16-methylheptadecan-1-ol + 2 NADP(+) + CoA. The catalysed reaction is 18-methylnonadecanoyl-CoA + 2 NADPH + 2 H(+) = 18-methylnonadecan-1-ol + 2 NADP(+) + CoA. Functionally, catalyzes the reduction of saturated and unsaturated C16 or C18 fatty acyl-CoA to fatty alcohols. It plays an essential role in the production of ether lipids/plasmalogens which synthesis requires fatty alcohols. In parallel, it is also required for wax monoesters production since fatty alcohols also constitute a substrate for their synthesis. The polypeptide is Fatty acyl-CoA reductase 1 (Pongo abelii (Sumatran orangutan)).